A 348-amino-acid polypeptide reads, in one-letter code: Histidinol-phosphate aminotransferase (348 aa).

K207 bears the N6-(pyridoxal phosphate)lysine mark.

Belongs to the class-II pyridoxal-phosphate-dependent aminotransferase family. Histidinol-phosphate aminotransferase subfamily. In terms of assembly, homodimer. It depends on pyridoxal 5'-phosphate as a cofactor.

The enzyme catalyses L-histidinol phosphate + 2-oxoglutarate = 3-(imidazol-4-yl)-2-oxopropyl phosphate + L-glutamate. It participates in amino-acid biosynthesis; L-histidine biosynthesis; L-histidine from 5-phospho-alpha-D-ribose 1-diphosphate: step 7/9. The chain is Histidinol-phosphate aminotransferase from Crocosphaera subtropica (strain ATCC 51142 / BH68) (Cyanothece sp. (strain ATCC 51142)).